A 297-amino-acid chain; its full sequence is Mycothiol acetyltransferase (297 aa).

2 N-acetyltransferase domains span residues 8–153 and 156–297; these read DALD…PPLP and VALR…QYAL. Glu-36 is a 1D-myo-inositol 2-(L-cysteinylamino)-2-deoxy-alpha-D-glucopyranoside binding site. An acetyl-CoA-binding site is contributed by 80–82; that stretch reads LAV. Glu-183, Lys-223, and Glu-231 together coordinate 1D-myo-inositol 2-(L-cysteinylamino)-2-deoxy-alpha-D-glucopyranoside. Acetyl-CoA contacts are provided by residues 235 to 237 and 242 to 248; these read VGV and QGGGLGK. 1D-myo-inositol 2-(L-cysteinylamino)-2-deoxy-alpha-D-glucopyranoside is bound at residue Tyr-269. 274–279 is an acetyl-CoA binding site; sequence NSPAVR.

The protein belongs to the acetyltransferase family. MshD subfamily. Monomer.

The catalysed reaction is 1D-myo-inositol 2-(L-cysteinylamino)-2-deoxy-alpha-D-glucopyranoside + acetyl-CoA = mycothiol + CoA + H(+). In terms of biological role, catalyzes the transfer of acetyl from acetyl-CoA to desacetylmycothiol (Cys-GlcN-Ins) to form mycothiol. This chain is Mycothiol acetyltransferase, found in Actinosynnema mirum (strain ATCC 29888 / DSM 43827 / JCM 3225 / NBRC 14064 / NCIMB 13271 / NRRL B-12336 / IMRU 3971 / 101).